We begin with the raw amino-acid sequence, 344 residues long: Phosphate acyltransferase (344 aa).

The protein belongs to the PlsX family. As to quaternary structure, homodimer. Probably interacts with PlsY.

It localises to the cytoplasm. It carries out the reaction a fatty acyl-[ACP] + phosphate = an acyl phosphate + holo-[ACP]. The protein operates within lipid metabolism; phospholipid metabolism. Functionally, catalyzes the reversible formation of acyl-phosphate (acyl-PO(4)) from acyl-[acyl-carrier-protein] (acyl-ACP). This enzyme utilizes acyl-ACP as fatty acyl donor, but not acyl-CoA. This chain is Phosphate acyltransferase, found in Yersinia pestis bv. Antiqua (strain Antiqua).